We begin with the raw amino-acid sequence, 71 residues long: UPF0434 protein APH_0052 (71 aa).

The segment covering 52-63 (RKLQPEEPKEGS) has biased composition (basic and acidic residues). The disordered stretch occupies residues 52 to 71 (RKLQPEEPKEGSELQSSDNQ).

Belongs to the UPF0434 family.

The polypeptide is UPF0434 protein APH_0052 (Anaplasma phagocytophilum (strain HZ)).